A 425-amino-acid polypeptide reads, in one-letter code: Serine--tRNA ligase (425 aa).

Residue 230 to 232 (TAE) participates in L-serine binding. ATP is bound at residue 261–263 (RSE). Residue E284 participates in L-serine binding. An ATP-binding site is contributed by 348–351 (EISS). S384 serves as a coordination point for L-serine.

The protein belongs to the class-II aminoacyl-tRNA synthetase family. Type-1 seryl-tRNA synthetase subfamily. In terms of assembly, homodimer. The tRNA molecule binds across the dimer.

The protein localises to the cytoplasm. The catalysed reaction is tRNA(Ser) + L-serine + ATP = L-seryl-tRNA(Ser) + AMP + diphosphate + H(+). It catalyses the reaction tRNA(Sec) + L-serine + ATP = L-seryl-tRNA(Sec) + AMP + diphosphate + H(+). Its pathway is aminoacyl-tRNA biosynthesis; selenocysteinyl-tRNA(Sec) biosynthesis; L-seryl-tRNA(Sec) from L-serine and tRNA(Sec): step 1/1. Catalyzes the attachment of serine to tRNA(Ser). Is also able to aminoacylate tRNA(Sec) with serine, to form the misacylated tRNA L-seryl-tRNA(Sec), which will be further converted into selenocysteinyl-tRNA(Sec). The protein is Serine--tRNA ligase of Streptococcus equi subsp. zooepidemicus (strain H70).